The primary structure comprises 350 residues: MSTSAAPGKLATTLGANVSSLASKVRSTSSTQQSLMQSVKRIIPPLSSAKHKGQAGRIGIVGGSRDYTGAPFFASMSSMRFGCDMSYTICTPEAGNVIKTYSPDLIVNRLLDASVEWSQVERSVDELFARFHAVVIGPGLGRDEFMQKCAKLCIGLARKHDMYLVVDADGLWLLQNEPDLIKGYKKAILTPNVAEFGRLCDTLGIDCKQEPDSAAKKLAQALEGPTVLEKGPVDRITNGKEVLYVDLQGGLKRCGGQGDVLAGCLGTLAGWAKIYQDENPTLPARSTTTDGDLIAEDRLLLLAGYAASVTARTCSRLAFAKSKRAMLADDLLPEVGRAYEELWGDVQALL.

One can recognise a YjeF C-terminal domain in the interval 35-342 (LMQSVKRIIP…PEVGRAYEEL (308 aa)). (6S)-NADPHX contacts are provided by residues Gly139 and 192-198 (NVAEFGR). ATP contacts are provided by residues 230 to 234 (KGPVD) and 249 to 258 (GGLKRCGGQG). Position 259 (Asp259) interacts with (6S)-NADPHX.

It belongs to the NnrD/CARKD family. It depends on Mg(2+) as a cofactor.

It localises to the cytoplasm. It catalyses the reaction (6S)-NADHX + ATP = ADP + phosphate + NADH + H(+). The enzyme catalyses (6S)-NADPHX + ATP = ADP + phosphate + NADPH + H(+). Its function is as follows. Catalyzes the dehydration of the S-form of NAD(P)HX at the expense of ATP, which is converted to ADP. Together with NAD(P)HX epimerase, which catalyzes the epimerization of the S- and R-forms, the enzyme allows the repair of both epimers of NAD(P)HX, a damaged form of NAD(P)H that is a result of enzymatic or heat-dependent hydration. In Mycosarcoma maydis (Corn smut fungus), this protein is ATP-dependent (S)-NAD(P)H-hydrate dehydratase.